Here is a 59-residue protein sequence, read N- to C-terminus: Single-pass membrane and coiled-coil domain-containing protein 4 (59 aa).

The tract at residues 1–23 (MRQLKGKPKKETSKDKKERKQAM) is disordered. Residues 9-22 (KKETSKDKKERKQA) are compositionally biased toward basic and acidic residues. Positions 9-31 (KKETSKDKKERKQAMQEARQQIT) form a coiled coil. The helical transmembrane segment at 32 to 52 (TVVLPTLAVVVLLIVVFVYVA) threads the bilayer.

Belongs to the SMCO4 family.

The protein resides in the membrane. This Mus musculus (Mouse) protein is Single-pass membrane and coiled-coil domain-containing protein 4 (Smco4).